A 165-amino-acid chain; its full sequence is Chorismate pyruvate-lyase (165 aa).

The substrate site is built by M35, R77, L115, and E156.

This sequence belongs to the UbiC family. In terms of assembly, monomer.

Its subcellular location is the cytoplasm. It carries out the reaction chorismate = 4-hydroxybenzoate + pyruvate. The protein operates within cofactor biosynthesis; ubiquinone biosynthesis. Functionally, removes the pyruvyl group from chorismate, with concomitant aromatization of the ring, to provide 4-hydroxybenzoate (4HB) for the ubiquinone pathway. The chain is Chorismate pyruvate-lyase from Salmonella arizonae (strain ATCC BAA-731 / CDC346-86 / RSK2980).